The sequence spans 588 residues: Pre-mRNA 3'-end-processing factor FIP1 (588 aa).

Residues 1–10 (MSAGEVERLV) are compositionally biased toward basic and acidic residues. 3 disordered regions span residues 1–81 (MSAG…EDDV), 223–291 (QGRT…ESPD), and 334–588 (VDNN…TPAE). Residues 1–96 (MSAGEVERLV…DIKTGAPQYG (96 aa)) are sufficient for interaction with PAPOLA. Positions 1 to 341 (MSAGEVERLV…TAVDNNFSKP (341 aa)) are necessary for stimulating PAPOLA activity. Acidic residues-rich tracts occupy residues 19–40 (GDEEEEWLYGDENEVERPEEEN) and 66–80 (TEDDSDSDSDDDEDD). Ser70, Ser72, and Ser74 each carry phosphoserine. A sufficient for interaction with CPSF4 region spans residues 122–228 (KGVDLDAPGS…FKVQQGRTGN (107 aa)). The span at 259–270 (STSSQSQTSTAS) shows a compositional bias: low complexity. The span at 280–291 (WQDRYGRAESPD) shows a compositional bias: basic and acidic residues. Ser289 carries the post-translational modification Phosphoserine. Residues 340 to 398 (KPPPFFPPGAPPTHLPPPPFLPPPPTVSTAPPLIPPPGIPITVPPPGFPPPPGAPPPSL) are compositionally biased toward pro residues. A Phosphotyrosine modification is found at Tyr420. Residues 437–588 (SLVDTSKQWD…QESTEATPAE (152 aa)) form a sufficient for interaction with CPSF1 and CSTF3 region. The segment covering 448–486 (YARREKDRDRERDRDRERDRDRDRERERTRERERERDHS) has biased composition (basic and acidic residues). The arg/Asp/Glu-rich domain stretch occupies residues 451-484 (REKDRDRERDRDRERDRDRDRERERTRERERERD). Ser486 carries the phosphoserine modification. Thr488 bears the Phosphothreonine mark. Phosphoserine is present on residues Ser490 and Ser494. A compositionally biased stretch (basic and acidic residues) spans 495–522 (DEERYRYREYAERGYERHRASREKEERH). The segment covering 536–545 (KSSRSNSRRR) has biased composition (basic residues). Ser548 carries the post-translational modification Phosphoserine. Positions 554–564 (HRRHKHKKSKR) are enriched in basic residues.

It belongs to the FIP1 family. In terms of assembly, component of the cleavage and polyadenylation specificity factor (CPSF) complex, composed of CPSF1, CPSF2, CPSF3, CPSF4 and FIP1L1. Found in a complex with CPSF1, FIP1L1 and PAPOLA. Interacts with CPSF1, CPSF4, CSTF2 and CSTF3. Interacts with AHCYL1 (when phosphorylated); the interaction is direct and associates AHCYL1 with the CPSF complex and RNA. Interacts with PAPOLA; the interaction seems to be increased by the interaction with AHCYL1. Interacts with NUDT21/CPSF5; this interaction occurs in a RNA sequence-specific manner. Interacts (preferentially via unphosphorylated form and Arg/Glu/Asp-rich domain) with CPSF6 (via Arg/Ser-rich domain); this interaction mediates, at least in part, the interaction between the CFIm and CPSF complexes and may be inhibited by CPSF6 hyper-phosphorylation. Interacts (preferentially via unphosphorylated form and Arg/Asp/Glu-rich domain) with CPSF7 (via Arg/Ser-rich domain); this interaction mediates, at least in part, the interaction between the CFIm and CPSF complexes and may be inhibited by CPSF7 hyper-phosphorylation.

It localises to the nucleus. Its function is as follows. Component of the cleavage and polyadenylation specificity factor (CPSF) complex that plays a key role in pre-mRNA 3'-end formation, recognizing the AAUAAA signal sequence and interacting with poly(A) polymerase and other factors to bring about cleavage and poly(A) addition. FIP1L1 contributes to poly(A) site recognition and stimulates poly(A) addition. Binds to U-rich RNA sequence elements surrounding the poly(A) site. May act to tether poly(A) polymerase to the CPSF complex. This is Pre-mRNA 3'-end-processing factor FIP1 (FIP1L1) from Pongo abelii (Sumatran orangutan).